A 37-amino-acid chain; its full sequence is Cortex morphogenetic protein A (37 aa).

As to quaternary structure, can form a complex with SpoIVA and ClpX.

The protein resides in the forespore. Functionally, ensures proper spore envelope assembly. Represses premature cortex assembly until coat assembly successfully initiates. Also participates in a quality-control pathway that selectively removes defective sporulating cells through regulated cell death. Acts as an adaptator that delivers SpoIVA to the ClpXP proteolytic machinery for degradation, specifically in cells that improperly assemble the spore envelope. The protein is Cortex morphogenetic protein A of Bacillus subtilis (strain 168).